The primary structure comprises 117 residues: Hainantoxin-XV-4 (117 aa).

The first 20 residues, 1 to 20 (MKLCAVIIASLLVCVAVASS), serve as a signal peptide directing secretion. The interval 20-55 (SSDNQKEFAQEKEMTREETQSLGEHEKDDEVTGSEE) is disordered. Residues 21-56 (SDNQKEFAQEKEMTREETQSLGEHEKDDEVTGSEER) constitute a propeptide that is removed on maturation. A compositionally biased stretch (basic and acidic residues) spans 23–55 (NQKEFAQEKEMTREETQSLGEHEKDDEVTGSEE). Intrachain disulfides connect C58/C72, C65/C78, C69/C115, and C71/C91.

This sequence belongs to the neurotoxin 03 (Tx2) family. 02 subfamily. HNTX-XV sub-subfamily. In terms of tissue distribution, expressed by the venom gland.

It is found in the secreted. In terms of biological role, putative ion channel inhibitor. This chain is Hainantoxin-XV-4, found in Cyriopagopus hainanus (Chinese bird spider).